Reading from the N-terminus, the 190-residue chain is Peptidyl-tRNA hydrolase (190 aa).

Phe-14 is a binding site for tRNA. The active-site Proton acceptor is the His-19. Positions 64, 66, and 112 each coordinate tRNA.

This sequence belongs to the PTH family. In terms of assembly, monomer.

The protein resides in the cytoplasm. The catalysed reaction is an N-acyl-L-alpha-aminoacyl-tRNA + H2O = an N-acyl-L-amino acid + a tRNA + H(+). Its function is as follows. Hydrolyzes ribosome-free peptidyl-tRNAs (with 1 or more amino acids incorporated), which drop off the ribosome during protein synthesis, or as a result of ribosome stalling. Catalyzes the release of premature peptidyl moieties from peptidyl-tRNA molecules trapped in stalled 50S ribosomal subunits, and thus maintains levels of free tRNAs and 50S ribosomes. The sequence is that of Peptidyl-tRNA hydrolase from Staphylococcus epidermidis (strain ATCC 35984 / DSM 28319 / BCRC 17069 / CCUG 31568 / BM 3577 / RP62A).